Consider the following 476-residue polypeptide: Protein transport protein Sec61 subunit alpha isoform 1 (476 aa).

The Cytoplasmic portion of the chain corresponds to 1–33; the sequence is MAIKFLEVIKPFCVILPEIQKPERKIQFKEKVL. Residues 34-53 form a helical membrane-spanning segment; that stretch reads WTAITLFIFLVCCQIPLFGI. Topologically, residues 54-76 are lumenal; sequence MSSDSADPFYWMRVILASNRGTL. Residues 77–96 traverse the membrane as a helical segment; the sequence is MELGISPIVTSGLIMQLLAG. The Cytoplasmic segment spans residues 97–117; that stretch reads AKIIEVGDTPKDRALFNGAQK. Residues 118-138 form a helical membrane-spanning segment; that stretch reads LFGMIITIGQSIVYVMTGMYG. At 139–144 the chain is on the lumenal side; that stretch reads DPSEMG. The helical transmembrane segment at 145–165 threads the bilayer; the sequence is AGICLLITIQLFVAGLIVLLL. Over 166 to 172 the chain is Cytoplasmic; that stretch reads DELLQKG. A helical membrane pass occupies residues 173–193; it reads YGLGSGISLFIATNICETIVW. Over 194–240 the chain is Lumenal; that stretch reads KAFSPTTVNTGRGMEFEGAIIALFHLLATRTDKVRALREAFYRQNLP. The chain crosses the membrane as a helical span at residues 241 to 261; it reads NLMNLIATIFVFAVVIYFQGF. Over 262-288 the chain is Cytoplasmic; the sequence is RVDLPIKSARYRGQYNTYPIKLFYTSN. The helical transmembrane segment at 289–309 threads the bilayer; it reads IPIILQSALVSNLYVISQMLS. At 310-354 the chain is on the lumenal side; it reads ARFSGNLLVSLLGTWSDTSSGGPARAYPVGGLCYYLSPPESFGSV. Residues 355–375 traverse the membrane as a helical segment; the sequence is LEDPVHAVVYIVFMLGSCAFF. At 376-420 the chain is on the cytoplasmic side; that stretch reads SKTWIEVSGSSAKDVAKQLKEQQMVMRGHRETSMVHELNRYIPTA. Residues 421–441 form a helical membrane-spanning segment; the sequence is AAFGGLCIGALSVLADFLGAI. The Lumenal portion of the chain corresponds to 442-445; it reads GSGT. The chain crosses the membrane as a helical span at residues 446 to 462; that stretch reads GILLAVTIIYQYFEIFV. Over 463 to 476 the chain is Cytoplasmic; that stretch reads KEQSEVGSMGALLF.

The protein belongs to the SecY/SEC61-alpha family. In terms of assembly, the SEC61 channel-forming translocon complex consists of channel-forming core components SEC61A1, SEC61B and SEC61G and different auxiliary components such as SEC62 and SEC63. The SEC61 channel associates with the multi-pass translocon (MPT) complex. In terms of tissue distribution, expressed in proximal and distal tubules in kidney (at protein level).

The protein localises to the endoplasmic reticulum membrane. Component of SEC61 channel-forming translocon complex that mediates transport of signal peptide-containing precursor polypeptides across the endoplasmic reticulum (ER). Forms a ribosome receptor and a gated pore in the ER membrane, both functions required for cotranslational translocation of nascent polypeptides. May cooperate with auxiliary protein SEC62, SEC63 and HSPA5/BiP to enable post-translational transport of small presecretory proteins. The SEC61 channel is also involved in ER membrane insertion of transmembrane proteins: it mediates membrane insertion of the first few transmembrane segments of proteins, while insertion of subsequent transmembrane regions of multi-pass membrane proteins is mediated by the multi-pass translocon (MPT) complex. The SEC61 channel cooperates with the translocating protein TRAM1 to import nascent proteins into the ER. Controls the passive efflux of calcium ions from the ER lumen to the cytosol through SEC61 channel, contributing to the maintenance of cellular calcium homeostasis. Plays a critical role in nephrogenesis, specifically at pronephros stage. The polypeptide is Protein transport protein Sec61 subunit alpha isoform 1 (SEC61A1) (Homo sapiens (Human)).